The primary structure comprises 341 residues: uncharacterized protein (341 aa).

This is an uncharacterized protein from Methanocaldococcus jannaschii (strain ATCC 43067 / DSM 2661 / JAL-1 / JCM 10045 / NBRC 100440) (Methanococcus jannaschii).